A 113-amino-acid polypeptide reads, in one-letter code: Guanylate cyclase activator 2B (113 aa).

A signal peptide spans 1-27; that stretch reads MASRAAAGLLLCGVALVFLVLLQGTQS. Positions 28–97 are excised as a propeptide; it reads VYIQYQGFRV…SIFQALRTIA (70 aa). 3 disulfides stabilise this stretch: cysteine 68–cysteine 81, cysteine 101–cysteine 109, and cysteine 104–cysteine 112.

It belongs to the guanylin family.

The protein localises to the secreted. Functionally, endogenous activator of intestinal guanylate cyclase. It stimulates this enzyme through the same receptor binding region as the heat-stable enterotoxins. May be a potent physiological regulator of intestinal fluid and electrolyte transport. May be an autocrine/paracrine regulator of intestinal salt and water transport. The protein is Guanylate cyclase activator 2B (GUCA2B) of Sus scrofa (Pig).